The chain runs to 418 residues: Light-independent protochlorophyllide reductase subunit N (418 aa).

Positions 17, 42, and 103 each coordinate [4Fe-4S] cluster.

The protein belongs to the BchN/ChlN family. Protochlorophyllide reductase is composed of three subunits; ChlL, ChlN and ChlB. Forms a heterotetramer of two ChlB and two ChlN subunits. It depends on [4Fe-4S] cluster as a cofactor.

It catalyses the reaction chlorophyllide a + oxidized 2[4Fe-4S]-[ferredoxin] + 2 ADP + 2 phosphate = protochlorophyllide a + reduced 2[4Fe-4S]-[ferredoxin] + 2 ATP + 2 H2O. Its pathway is porphyrin-containing compound metabolism; chlorophyll biosynthesis (light-independent). Component of the dark-operative protochlorophyllide reductase (DPOR) that uses Mg-ATP and reduced ferredoxin to reduce ring D of protochlorophyllide (Pchlide) to form chlorophyllide a (Chlide). This reaction is light-independent. The NB-protein (ChlN-ChlB) is the catalytic component of the complex. This Prochlorococcus marinus subsp. pastoris (strain CCMP1986 / NIES-2087 / MED4) protein is Light-independent protochlorophyllide reductase subunit N.